Consider the following 427-residue polypeptide: Chaperone SurA (427 aa).

The signal sequence occupies residues 1–19; the sequence is MKIWKSILFTTLLSCGAVA. 2 PpiC domains span residues 170 to 268 and 277 to 377; these read TVQY…KIED and VTEV…EVLD.

The protein localises to the periplasm. The enzyme catalyses [protein]-peptidylproline (omega=180) = [protein]-peptidylproline (omega=0). Functionally, chaperone involved in the correct folding and assembly of outer membrane proteins. Recognizes specific patterns of aromatic residues and the orientation of their side chains, which are found more frequently in integral outer membrane proteins. May act in both early periplasmic and late outer membrane-associated steps of protein maturation. The sequence is that of Chaperone SurA from Vibrio parahaemolyticus serotype O3:K6 (strain RIMD 2210633).